Reading from the N-terminus, the 254-residue chain is Triosephosphate isomerase (254 aa).

9 to 11 serves as a coordination point for substrate; the sequence is NWK. The active-site Electrophile is the histidine 95. Glutamate 167 serves as the catalytic Proton acceptor. Residues glycine 173, serine 213, and 234–235 each bind substrate; that span reads GG.

The protein belongs to the triosephosphate isomerase family. As to quaternary structure, homodimer.

The protein localises to the cytoplasm. The catalysed reaction is D-glyceraldehyde 3-phosphate = dihydroxyacetone phosphate. It functions in the pathway carbohydrate biosynthesis; gluconeogenesis. The protein operates within carbohydrate degradation; glycolysis; D-glyceraldehyde 3-phosphate from glycerone phosphate: step 1/1. Its function is as follows. Involved in the gluconeogenesis. Catalyzes stereospecifically the conversion of dihydroxyacetone phosphate (DHAP) to D-glyceraldehyde-3-phosphate (G3P). The chain is Triosephosphate isomerase from Roseiflexus sp. (strain RS-1).